We begin with the raw amino-acid sequence, 623 residues long: Serine/threonine-protein kinase MAK (623 aa).

Positions 4 to 284 constitute a Protein kinase domain; it reads YTTMRQLGDG…ASQALKHPYF (281 aa). ATP-binding positions include 10 to 18 and lysine 33; that span reads LGDGTYGSV. The Proton acceptor role is filled by aspartate 125. Threonine 157 is subject to Phosphothreonine; by autocatalysis. A Phosphotyrosine; by autocatalysis modification is found at tyrosine 159. Disordered stretches follow at residues 328–396 and 416–469; these read IDQV…RRRW and GASH…SDSE. Low complexity predominate over residues 356–369; that stretch reads QQPPKQQSQEKPPQ. The segment covering 446-455 has biased composition (polar residues); that stretch reads SGSNHSTGEN.

It belongs to the protein kinase superfamily. CMGC Ser/Thr protein kinase family. CDC2/CDKX subfamily. In terms of assembly, interacts with RP1. Interacts with AR and CDK20. Found in a complex containing MAK, AR and NCOA3. Interacts with FZR1 (via WD repeats). The cofactor is Mg(2+). In terms of processing, autophosphorylated. Phosphorylated on serine and threonine residues. In terms of tissue distribution, expressed in prostate cancer cell lines at generally higher levels than in normal prostate epithelial cell lines. Isoform 1 is expressed in kidney, testis, lung, trachea, and retina. Isoform 2 is retina-specific where it is expressed in rod and cone photoreceptors.

The protein resides in the nucleus. It is found in the cytoplasm. The protein localises to the cytoskeleton. Its subcellular location is the microtubule organizing center. It localises to the centrosome. The protein resides in the spindle. It is found in the midbody. The protein localises to the cell projection. Its subcellular location is the cilium. It localises to the photoreceptor outer segment. The protein resides in the photoreceptor inner segment. It carries out the reaction L-seryl-[protein] + ATP = O-phospho-L-seryl-[protein] + ADP + H(+). It catalyses the reaction L-threonyl-[protein] + ATP = O-phospho-L-threonyl-[protein] + ADP + H(+). Its function is as follows. Essential for the regulation of ciliary length and required for the long-term survival of photoreceptors. Phosphorylates FZR1 in a cell cycle-dependent manner. Plays a role in the transcriptional coactivation of AR. Could play an important function in spermatogenesis. May play a role in chromosomal stability in prostate cancer cells. This Homo sapiens (Human) protein is Serine/threonine-protein kinase MAK (MAK).